An 84-amino-acid chain; its full sequence is ATP synthase subunit c (84 aa).

Helical transmembrane passes span 9 to 29 (IIAS…GFAI) and 54 to 74 (IVAG…LLFI).

This sequence belongs to the ATPase C chain family. In terms of assembly, F-type ATPases have 2 components, F(1) - the catalytic core - and F(0) - the membrane proton channel. F(1) has five subunits: alpha(3), beta(3), gamma(1), delta(1), epsilon(1). F(0) has three main subunits: a(1), b(2) and c(10-14). The alpha and beta chains form an alternating ring which encloses part of the gamma chain. F(1) is attached to F(0) by a central stalk formed by the gamma and epsilon chains, while a peripheral stalk is formed by the delta and b chains.

It is found in the cell inner membrane. Its function is as follows. F(1)F(0) ATP synthase produces ATP from ADP in the presence of a proton or sodium gradient. F-type ATPases consist of two structural domains, F(1) containing the extramembraneous catalytic core and F(0) containing the membrane proton channel, linked together by a central stalk and a peripheral stalk. During catalysis, ATP synthesis in the catalytic domain of F(1) is coupled via a rotary mechanism of the central stalk subunits to proton translocation. In terms of biological role, key component of the F(0) channel; it plays a direct role in translocation across the membrane. A homomeric c-ring of between 10-14 subunits forms the central stalk rotor element with the F(1) delta and epsilon subunits. The chain is ATP synthase subunit c from Pasteurella multocida (strain Pm70).